The following is a 298-amino-acid chain: ATP synthase gamma chain (298 aa).

This sequence belongs to the ATPase gamma chain family. As to quaternary structure, F-type ATPases have 2 components, CF(1) - the catalytic core - and CF(0) - the membrane proton channel. CF(1) has five subunits: alpha(3), beta(3), gamma(1), delta(1), epsilon(1). CF(0) has three main subunits: a, b and c.

It is found in the cell inner membrane. Produces ATP from ADP in the presence of a proton gradient across the membrane. The gamma chain is believed to be important in regulating ATPase activity and the flow of protons through the CF(0) complex. This Francisella tularensis subsp. tularensis (strain FSC 198) protein is ATP synthase gamma chain.